Here is a 101-residue protein sequence, read N- to C-terminus: NAD(P)H-quinone oxidoreductase subunit 4L, chloroplastic (101 aa).

The next 3 helical transmembrane spans lie at Ile2–Ile22, Met32–Phe52, and Ile61–Val81.

The protein belongs to the complex I subunit 4L family. As to quaternary structure, NDH is composed of at least 16 different subunits, 5 of which are encoded in the nucleus.

Its subcellular location is the plastid. The protein resides in the chloroplast thylakoid membrane. The catalysed reaction is a plastoquinone + NADH + (n+1) H(+)(in) = a plastoquinol + NAD(+) + n H(+)(out). The enzyme catalyses a plastoquinone + NADPH + (n+1) H(+)(in) = a plastoquinol + NADP(+) + n H(+)(out). In terms of biological role, NDH shuttles electrons from NAD(P)H:plastoquinone, via FMN and iron-sulfur (Fe-S) centers, to quinones in the photosynthetic chain and possibly in a chloroplast respiratory chain. The immediate electron acceptor for the enzyme in this species is believed to be plastoquinone. Couples the redox reaction to proton translocation, and thus conserves the redox energy in a proton gradient. The protein is NAD(P)H-quinone oxidoreductase subunit 4L, chloroplastic of Glycine max (Soybean).